Here is a 718-residue protein sequence, read N- to C-terminus: DNA topoisomerase 1 (718 aa).

The Toprim domain maps to 9–151; the sequence is HEVIICEKPK…KFSTLTREEI (143 aa). E15 and D113 together coordinate Mg(2+). The Topo IA-type catalytic domain maps to 162–571; sequence DYGQVDSGAA…EAITEVRSIL (410 aa). The interval 202–207 is interaction with DNA; sequence SAGRVQ. The active-site O-(5'-phospho-DNA)-tyrosine intermediate is Y320. Over residues 361–371 the composition is skewed to basic and acidic residues; that stretch reads HEGKKEDDAHP. A disordered region spans residues 361–380; that stretch reads HEGKKEDDAHPAIHPTGLLP. C4-type zinc fingers lie at residues 598 to 626 and 680 to 706; these read CPAC…YPDC and CPEC…FPKC.

Belongs to the type IA topoisomerase family. As to quaternary structure, monomer. It depends on Mg(2+) as a cofactor.

The enzyme catalyses ATP-independent breakage of single-stranded DNA, followed by passage and rejoining.. Releases the supercoiling and torsional tension of DNA, which is introduced during the DNA replication and transcription, by transiently cleaving and rejoining one strand of the DNA duplex. Introduces a single-strand break via transesterification at a target site in duplex DNA. The scissile phosphodiester is attacked by the catalytic tyrosine of the enzyme, resulting in the formation of a DNA-(5'-phosphotyrosyl)-enzyme intermediate and the expulsion of a 3'-OH DNA strand. The free DNA strand then undergoes passage around the unbroken strand, thus removing DNA supercoils. Finally, in the religation step, the DNA 3'-OH attacks the covalent intermediate to expel the active-site tyrosine and restore the DNA phosphodiester backbone. The sequence is that of DNA topoisomerase 1 from Methanothermobacter thermautotrophicus (strain ATCC 29096 / DSM 1053 / JCM 10044 / NBRC 100330 / Delta H) (Methanobacterium thermoautotrophicum).